We begin with the raw amino-acid sequence, 222 residues long: MTTALLLCLCLLLITYLMGSIPTGYLAGKLLLGIDIREHGSKSTGATNVFRTLGKPAAIAVLAIDISKGVMAVALVRAIYSGDWLPALPAAWQNWLTLGVAIAVVLGHSKSIFLKFSGGKSVATSLGVLFMLNIWLALGTLATFLTVIFFTRIVSLSSIVAAIAVNGIALALQLPPPYLAFTFLAGMYVIVRHRTNIERILQGTEPKLGEKVSSVPDRKGVA.

The next 6 membrane-spanning stretches (helical) occupy residues 4–24 (ALLL…IPTG), 56–76 (PAAI…VALV), 87–107 (ALPA…VVLG), 130–150 (FMLN…VIFF), 153–173 (IVSL…LALQ), and 174–191 (LPPP…YVIV).

The protein belongs to the PlsY family. In terms of assembly, probably interacts with PlsX.

The protein localises to the cell inner membrane. The enzyme catalyses an acyl phosphate + sn-glycerol 3-phosphate = a 1-acyl-sn-glycero-3-phosphate + phosphate. Its pathway is lipid metabolism; phospholipid metabolism. Catalyzes the transfer of an acyl group from acyl-phosphate (acyl-PO(4)) to glycerol-3-phosphate (G3P) to form lysophosphatidic acid (LPA). This enzyme utilizes acyl-phosphate as fatty acyl donor, but not acyl-CoA or acyl-ACP. The chain is Glycerol-3-phosphate acyltransferase from Synechocystis sp. (strain ATCC 27184 / PCC 6803 / Kazusa).